We begin with the raw amino-acid sequence, 74 residues long: Exodeoxyribonuclease 7 small subunit (74 aa).

The protein belongs to the XseB family. Heterooligomer composed of large and small subunits.

It is found in the cytoplasm. It carries out the reaction Exonucleolytic cleavage in either 5'- to 3'- or 3'- to 5'-direction to yield nucleoside 5'-phosphates.. In terms of biological role, bidirectionally degrades single-stranded DNA into large acid-insoluble oligonucleotides, which are then degraded further into small acid-soluble oligonucleotides. This Actinobacillus pleuropneumoniae serotype 5b (strain L20) protein is Exodeoxyribonuclease 7 small subunit.